The sequence spans 193 residues: Early light-induced protein 2, chloroplastic (193 aa).

A chloroplast-targeting transit peptide spans 1–43 (MATASFNMQSVFAAPSGVLTTRNIRNTNQLFFKRIAPVGVRCM). The disordered stretch occupies residues 46-80 (GDPIKEDPSVPSTSTSATPPQMPQSPPPPVSKPKV). The segment covering 54-64 (SVPSTSTSATP) has biased composition (low complexity). Positions 65–76 (PQMPQSPPPPVS) are enriched in pro residues. The next 3 helical transmembrane spans lie at 102–122 (LAMV…ENVF), 129–149 (GVGW…VPLF), and 173–193 (FAML…GTLV).

The protein belongs to the ELIP/psbS family.

It localises to the plastid. It is found in the chloroplast thylakoid membrane. In terms of biological role, probably involved in the integration of pigments into the mature light-harvesting pigment-protein complexes. Light-harvesting chlorophyll (LHC) a/b-binding protein required to ensure a high rate of chlorophyll accumulation during deetiolation in continuous high light. Involved in seed germination. May fulfill a photoprotective functions. Prevents excess accumulation of free chlorophyll by inhibiting the entire chlorophyll biosynthesis pathway (e.g. 5-aminolevulinate synthesis and Mg-protoporphyrin IX chelatase activity), and hence prevent photooxidative stress. This is Early light-induced protein 2, chloroplastic from Arabidopsis thaliana (Mouse-ear cress).